The chain runs to 148 residues: Small ribosomal subunit protein bS6 (148 aa).

The segment at His96–Ala148 is disordered.

This sequence belongs to the bacterial ribosomal protein bS6 family.

Binds together with bS18 to 16S ribosomal RNA. This Brucella melitensis biotype 1 (strain ATCC 23456 / CCUG 17765 / NCTC 10094 / 16M) protein is Small ribosomal subunit protein bS6.